The chain runs to 217 residues: Uracil phosphoribosyltransferase (217 aa).

Residues arginine 84, arginine 109, and 137–145 contribute to the 5-phospho-alpha-D-ribose 1-diphosphate site; that span reads DPMLATGGS. Residues isoleucine 202 and 207 to 209 each bind uracil; that span reads GDA. Position 208 (aspartate 208) interacts with 5-phospho-alpha-D-ribose 1-diphosphate.

This sequence belongs to the UPRTase family. Mg(2+) is required as a cofactor.

It carries out the reaction UMP + diphosphate = 5-phospho-alpha-D-ribose 1-diphosphate + uracil. Its pathway is pyrimidine metabolism; UMP biosynthesis via salvage pathway; UMP from uracil: step 1/1. With respect to regulation, allosterically activated by GTP. Its function is as follows. Catalyzes the conversion of uracil and 5-phospho-alpha-D-ribose 1-diphosphate (PRPP) to UMP and diphosphate. In Synechococcus elongatus (strain ATCC 33912 / PCC 7942 / FACHB-805) (Anacystis nidulans R2), this protein is Uracil phosphoribosyltransferase.